Consider the following 26-residue polypeptide: uncharacterized protein (26 aa).

Its subcellular location is the plastid. It is found in the chloroplast. This is an uncharacterized protein from Trieres chinensis (Marine centric diatom).